Consider the following 118-residue polypeptide: Secreted effector CSEP0064 (118 aa).

A signal peptide spans 1–21 (MRPFQLLSALAIFINLEAVEA). A disulfide bond links Cys-27 and Cys-113.

As to quaternary structure, interacts in planta with the pathogenesis-related protein PR10.

It is found in the secreted. The protein resides in the host cell. Its function is as follows. Secreted effector that increases susceptibility to infection in both monocotyledonous and dicotyledonous plants. Non-catalytic homolog of fungal RNases that binds host RNA and inhibits the degradation of host ribosomal RNA induced by ribosome-inactivating proteins (RIPs), preventing host cell death, an inviable interaction and demise of the fungus. This chain is Secreted effector CSEP0064, found in Blumeria graminis f. sp. hordei (strain DH14) (Barley powdery mildew).